The chain runs to 384 residues: S-adenosylmethionine synthase (384 aa).

His-15 lines the ATP pocket. Asp-17 lines the Mg(2+) pocket. K(+) is bound at residue Glu-43. L-methionine is bound by residues Glu-56 and Gln-99. The interval 99-109 (QSPDINQGVDR) is flexible loop. Residues 164–166 (DAK), 230–231 (RF), Asp-239, 245–246 (RK), Ala-262, and Lys-266 each bind ATP. Residue Asp-239 coordinates L-methionine. Lys-270 serves as a coordination point for L-methionine.

Belongs to the AdoMet synthase family. As to quaternary structure, homotetramer; dimer of dimers. Mg(2+) serves as cofactor. Requires K(+) as cofactor.

Its subcellular location is the cytoplasm. The enzyme catalyses L-methionine + ATP + H2O = S-adenosyl-L-methionine + phosphate + diphosphate. The protein operates within amino-acid biosynthesis; S-adenosyl-L-methionine biosynthesis; S-adenosyl-L-methionine from L-methionine: step 1/1. Functionally, catalyzes the formation of S-adenosylmethionine (AdoMet) from methionine and ATP. The overall synthetic reaction is composed of two sequential steps, AdoMet formation and the subsequent tripolyphosphate hydrolysis which occurs prior to release of AdoMet from the enzyme. This chain is S-adenosylmethionine synthase, found in Klebsiella pneumoniae (strain 342).